Reading from the N-terminus, the 273-residue chain is Proteasome subunit beta type-7-A (273 aa).

A propeptide spans 1-37 (removed in mature form); that stretch reads MSQSTVDVPPKGGFSFDLCKRNDMLTQKGLKAPSFLK. Thr40 acts as the Nucleophile in catalysis.

It belongs to the peptidase T1B family. In terms of assembly, component of the 20S core complex of the 26S proteasome. The 26S proteasome is composed of a core protease (CP), known as the 20S proteasome, capped at one or both ends by the 19S regulatory particle (RP/PA700). The 20S proteasome core is composed of 28 subunits that are arranged in four stacked rings, resulting in a barrel-shaped structure. The two end rings are each formed by seven alpha subunits, and the two central rings are each formed by seven beta subunits. The catalytic chamber with the active sites is on the inside of the barrel.

Its subcellular location is the cytoplasm. The protein localises to the nucleus. It catalyses the reaction Cleavage of peptide bonds with very broad specificity.. In terms of biological role, the proteasome is a multicatalytic proteinase complex which is characterized by its ability to cleave peptides with Arg, Phe, Tyr, Leu, and Glu adjacent to the leaving group at neutral or slightly basic pH. The proteasome has an ATP-dependent proteolytic activity. The polypeptide is Proteasome subunit beta type-7-A (PBB1) (Arabidopsis thaliana (Mouse-ear cress)).